The sequence spans 250 residues: Kv channel-interacting protein 4 (250 aa).

A KIS region spans residues 2-44 (NVRRVESISAQLEEASSTGGFLYAQNSTKRSIKERLMKLLPCS). Phosphoserine occurs at positions 17 and 56. In terms of domain architecture, EF-hand 1; degenerate spans 61–117 (LEMATVRHRPEALELLEAQSKFTKKELQILYRGFKNECPSGVVNEETFKEIYSQFFP). EF-hand domains are found at residues 120-155 (DSTT…LLRG), 156-191 (TVQE…IYDM), and 204-239 (APRQ…DENI). Ca(2+) contacts are provided by Asp133, Asp135, Asn137, Asp144, Asp169, Asn171, Asp173, Tyr175, Glu180, Asp217, Asn219, Asp221, and Glu228. Residues 237–250 (ENIMRSMQLFENVI) are interaction with KCND2.

It belongs to the recoverin family. In terms of assembly, component of heteromultimeric potassium channels. Identified in potassium channel complexes containing KCND1, KCND2, KCND3, KCNIP1, KCNIP2, KCNIP3, KCNIP4, DPP6 and DPP10. Interacts with KCND2. Interacts with KCND3. Interacts with the C-terminus of PSEN2 and probably PSEN1.

The protein resides in the cell membrane. It is found in the cytoplasm. It localises to the peroxisome. Regulatory subunit of Kv4/D (Shal)-type voltage-gated rapidly inactivating A-type potassium channels. Modulates KCND2 channel density, inactivation kinetics and rate of recovery from inactivation in a calcium-dependent and isoform-specific manner. Modulates KCND3/Kv4.3 currents. Isoform 4 does not increase KCND2 expression at the cell membrane. Isoform 4 retains KCND3 in the endoplasmic reticulum and negatively regulates its expression at the cell membrane. The polypeptide is Kv channel-interacting protein 4 (KCNIP4) (Macaca fascicularis (Crab-eating macaque)).